We begin with the raw amino-acid sequence, 143 residues long: Large ribosomal subunit protein uL11 (143 aa).

The protein belongs to the universal ribosomal protein uL11 family. In terms of assembly, part of the ribosomal stalk of the 50S ribosomal subunit. Interacts with L10 and the large rRNA to form the base of the stalk. L10 forms an elongated spine to which L12 dimers bind in a sequential fashion forming a multimeric L10(L12)X complex. One or more lysine residues are methylated.

In terms of biological role, forms part of the ribosomal stalk which helps the ribosome interact with GTP-bound translation factors. This Borreliella burgdorferi (strain ATCC 35210 / DSM 4680 / CIP 102532 / B31) (Borrelia burgdorferi) protein is Large ribosomal subunit protein uL11.